A 201-amino-acid polypeptide reads, in one-letter code: Large ribosomal subunit protein uL4 (201 aa).

The disordered stretch occupies residues 46 to 71 (QKTRAEVIGSGKKPWRQKGTGRARAG).

This sequence belongs to the universal ribosomal protein uL4 family. Part of the 50S ribosomal subunit.

One of the primary rRNA binding proteins, this protein initially binds near the 5'-end of the 23S rRNA. It is important during the early stages of 50S assembly. It makes multiple contacts with different domains of the 23S rRNA in the assembled 50S subunit and ribosome. In terms of biological role, forms part of the polypeptide exit tunnel. This is Large ribosomal subunit protein uL4 from Shewanella sediminis (strain HAW-EB3).